We begin with the raw amino-acid sequence, 492 residues long: MKALKITGLSLIISATLAAQTNAAEPIYPDQLRLFSLGEDVCGTDYRPINREEAQSVRNNIVAMMGQWQISGLANNWVILGPGYNGEIKPGKASTTWCYPTRPATAEIPVLPAFNIPDGDAVDVQWRMVHDSANFIKPVSYLAHYLGYAWVGGDHSQFVGDDMDVIQEGDDWVLRGNDGGKCDGYRCNEKSSIRVSNFAYTLDPGSFSHGDVTQSERTLVHTVVGWATNISDTPQSGYDVTLNYTTMSNWSKTNTYGLSEKVSTKNKFKWPLVGETEVSIEIAANQSWASQNGGAVTTALSQSVRPVVPARSRVPVKIELYKANISYPYEFKADMSYDLTFNGFLRWGGNAWHTHPEDRPTLSHTFAIGPFKDKASSIRYQWDKRYLPGEMKWWDWNWAIQQNGLATMQDSLARVLRPVRASITGDFRAESQFAGNIEIGTPVPLGSDSKVRRTRSVDGANTGLKLDIPLDAQELAELGFENVTLSVTPARN.

Residues 1 to 21 (MKALKITGLSLIISATLAAQT) form the signal peptide. 2 disulfide bridges follow: cysteine 42/cysteine 98 and cysteine 182/cysteine 187. Positions 68–84 (WQISGLANNWVILGPGY) are interaction with host N-linked glycan. Residues 256 to 288 (YGLSEKVSTKNKFKWPLVGETEVSIEIAANQSW) form a part of the transmembrane beta-barrel after proteolytic activation of the toxin and insertion into the host membrane region. Residues 346 to 355 (RWGGNAWHTH) form an interaction with glycans from host GPI-anchor region. A propeptide spanning residues 446-492 (GSDSKVRRTRSVDGANTGLKLDIPLDAQELAELGFENVTLSVTPARN) is cleaved from the precursor.

Belongs to the aerolysin family. Homodimer in solution; homoheptamer in the host membrane. After binding to GPI-anchored proteins in target membranes and proteolytic removal of the C-terminal propeptide, the protein assembles into a heptameric pre-pore complex. A further conformation change leads to insertion into the host membrane. In terms of processing, proteolytic cleavage and subsequent release of the propeptide trigger a major conformation change, leading to the formation of a heptameric pre-pore that then inserts into the host membrane.

The protein resides in the secreted. The protein localises to the host cell membrane. Secreted, cytolytic toxin that forms pores in host membranes after proteolytic removal of a C-terminal propeptide, leading to destruction of the membrane permeability barrier and cell death. The pores are formed by transmembrane beta-strands and are approximately 3 nm in diameter. This is Aerolysin (aerA) from Aeromonas enteropelogenes (Aeromonas trota).